Here is a 407-residue protein sequence, read N- to C-terminus: Argininosuccinate synthase (407 aa).

ATP is bound by residues 13–21 (AYSGGLDTS) and Ala40. 2 residues coordinate L-citrulline: Tyr91 and Ser96. Gly121 contacts ATP. The L-aspartate site is built by Thr123, Asn127, and Asp128. L-citrulline is bound at residue Asn127. 5 residues coordinate L-citrulline: Arg131, Ser182, Ser191, Glu267, and Tyr279.

Belongs to the argininosuccinate synthase family. Type 1 subfamily. As to quaternary structure, homotetramer.

The protein localises to the cytoplasm. It carries out the reaction L-citrulline + L-aspartate + ATP = 2-(N(omega)-L-arginino)succinate + AMP + diphosphate + H(+). Its pathway is amino-acid biosynthesis; L-arginine biosynthesis; L-arginine from L-ornithine and carbamoyl phosphate: step 2/3. The sequence is that of Argininosuccinate synthase from Rhizobium etli (strain ATCC 51251 / DSM 11541 / JCM 21823 / NBRC 15573 / CFN 42).